Reading from the N-terminus, the 109-residue chain is uncharacterized protein (109 aa).

The chain crosses the membrane as a helical span at residues 82–102 (SLSFLLLLFFYFNNYYFLSMT).

It is found in the membrane. This is an uncharacterized protein from Saccharomyces cerevisiae (strain ATCC 204508 / S288c) (Baker's yeast).